A 758-amino-acid chain; its full sequence is GPI ethanolamine phosphate transferase 2 (758 aa).

Residues N28, N77, and N178 are each glycosylated (N-linked (GlcNAc...) asparagine). Helical transmembrane passes span 405–425 (LVAI…FRNL), 431–451 (LLAF…SSFI), and 455–472 (HVIW…QLLN). The N-linked (GlcNAc...) asparagine glycan is linked to N493. 6 helical membrane-spanning segments follow: residues 533–553 (PSPI…MPII), 561–581 (PIIA…LLLI), 598–618 (LFIL…YDIW), 667–687 (IFAV…WWCL), 698–718 (VKTF…SCFI), and 733–753 (LLYN…ISTI).

The protein belongs to the PIGG/PIGN/PIGO family. PIGG subfamily.

Its subcellular location is the endoplasmic reticulum membrane. The protein operates within glycolipid biosynthesis; glycosylphosphatidylinositol-anchor biosynthesis. Ethanolamine phosphate transferase involved in glycosylphosphatidylinositol-anchor biosynthesis. Transfers ethanolamine phosphate to the GPI second mannose. The sequence is that of GPI ethanolamine phosphate transferase 2 (las21) from Schizosaccharomyces pombe (strain 972 / ATCC 24843) (Fission yeast).